The following is a 93-amino-acid chain: Cell division topological specificity factor (93 aa).

Belongs to the MinE family.

Prevents the cell division inhibition by proteins MinC and MinD at internal division sites while permitting inhibition at polar sites. This ensures cell division at the proper site by restricting the formation of a division septum at the midpoint of the long axis of the cell. The chain is Cell division topological specificity factor from Methylococcus capsulatus (strain ATCC 33009 / NCIMB 11132 / Bath).